A 261-amino-acid chain; its full sequence is UPF0328 protein ECU02_0020/ECU04_1700 (261 aa).

The interval 1-20 is disordered; sequence MSITSIPQPHETNEQHHTEI. The segment covering 11-20 has biased composition (basic and acidic residues); that stretch reads ETNEQHHTEI.

The protein belongs to the UPF0328 family.

This is UPF0328 protein ECU02_0020/ECU04_1700 from Encephalitozoon cuniculi (strain GB-M1) (Microsporidian parasite).